The primary structure comprises 424 residues: Protein maelstrom 1 (424 aa).

Positions Pro-2 to Asn-69 form a DNA-binding region, HMG box.

This sequence belongs to the maelstrom family.

The protein resides in the cytoplasm. It is found in the nucleus. Functionally, involved both in the piRNA and miRNA metabolic processes. As a component of the meiotic nuage, plays a central role during oogenesis by repressing transposable elements and preventing their mobilization, which is essential for the germline integrity. Repression of transposable elements is mediated via the piRNA metabolic process, which mediates the repression of transposable elements during meiosis by forming complexes composed of piRNAs and Piwi proteins and governs the repression of transposons. As a nuclear component, it is required for proper differentiation in the germline stem cell (GSC) lineage by repressing microRNA-7 (miR-7), thereby acting as an indirect regulator of bag-of-marbles (Bam). Acts by binding to the promoter of miR-7 gene and repressing its expression; miR-7 repression alleviates the Bam repression by miR-7, thereby allowing differentiation in the germline stem cell (GSC) lineage. The chain is Protein maelstrom 1 (mael1) from Drosophila ananassae (Fruit fly).